Reading from the N-terminus, the 609-residue chain is Threonine--tRNA ligase (609 aa).

The interval 1–143 is editing domain; the sequence is MRVLYIHAER…SFKPEGAKVE (143 aa). Catalytic regions lie at residues 195 to 491 and 196 to 491; these read PRYL…PRLP and RYLD…PRLP. C288, H339, and H460 together coordinate Zn(2+).

Belongs to the class-II aminoacyl-tRNA synthetase family. In terms of assembly, homodimer. Requires Zn(2+) as cofactor.

It localises to the cytoplasm. The catalysed reaction is tRNA(Thr) + L-threonine + ATP = L-threonyl-tRNA(Thr) + AMP + diphosphate + H(+). Functionally, catalyzes the attachment of threonine to tRNA(Thr) in a two-step reaction: L-threonine is first activated by ATP to form Thr-AMP and then transferred to the acceptor end of tRNA(Thr). Also edits incorrectly charged L-seryl-tRNA(Thr). In Pyrobaculum islandicum (strain DSM 4184 / JCM 9189 / GEO3), this protein is Threonine--tRNA ligase.